Here is a 31-residue protein sequence, read N- to C-terminus: Gamma-conotoxin-like As7a (31 aa).

Cystine bridges form between C2/C16, C9/C20, and C15/C31. E14 is subject to 4-carboxyglutamate.

It belongs to the conotoxin O1 superfamily. Expressed by the venom duct.

Its subcellular location is the secreted. In terms of biological role, gamma-conotoxins may act on voltage-gated non-specific cation pacemaker channels (HCN). Elicits toxic effects in the freshwater snail Pomacea paludosa after intramuscular injection, but it has no effect when injected intracerebrally into mice. The sequence is that of Gamma-conotoxin-like As7a from Conus cancellatus (Cancellate cone).